Reading from the N-terminus, the 543-residue chain is Glucose-6-phosphate isomerase (543 aa).

The active-site Proton donor is the E351. Catalysis depends on residues H382 and K511.

This sequence belongs to the GPI family.

The protein localises to the cytoplasm. It catalyses the reaction alpha-D-glucose 6-phosphate = beta-D-fructose 6-phosphate. It functions in the pathway carbohydrate biosynthesis; gluconeogenesis. It participates in carbohydrate degradation; glycolysis; D-glyceraldehyde 3-phosphate and glycerone phosphate from D-glucose: step 2/4. In terms of biological role, catalyzes the reversible isomerization of glucose-6-phosphate to fructose-6-phosphate. The chain is Glucose-6-phosphate isomerase from Hydrogenovibrio crunogenus (strain DSM 25203 / XCL-2) (Thiomicrospira crunogena).